We begin with the raw amino-acid sequence, 160 residues long: Sulfur-rich protein (160 aa).

2 helical membrane passes run 62–82 (ITMVVLGVILLIAGLALTFVL) and 91–111 (FLFLIPAVIGLVKLLTTSVFM).

Its subcellular location is the membrane. The polypeptide is Sulfur-rich protein (srp) (Chlamydia caviae (strain ATCC VR-813 / DSM 19441 / 03DC25 / GPIC) (Chlamydophila caviae)).